A 163-amino-acid polypeptide reads, in one-letter code: Dual specificity phosphatase 28 (163 aa).

One can recognise a Tyrosine-protein phosphatase domain in the interval 10-151 (PFARVAPALF…LQKYEQTLQA (142 aa)). The active-site Phosphocysteine intermediate is the cysteine 95.

Belongs to the protein-tyrosine phosphatase family. Non-receptor class dual specificity subfamily. In terms of assembly, monomer.

It carries out the reaction O-phospho-L-tyrosyl-[protein] + H2O = L-tyrosyl-[protein] + phosphate. The enzyme catalyses O-phospho-L-seryl-[protein] + H2O = L-seryl-[protein] + phosphate. It catalyses the reaction O-phospho-L-threonyl-[protein] + H2O = L-threonyl-[protein] + phosphate. Has phosphatase activity with the synthetic substrate 6,8-difluoro-4-methylumbelliferyl phosphate (in vitro). Has almost no detectable activity with phosphotyrosine, even less activity with phosphothreonine and displays complete lack of activity with phosphoserine. The poor activity with phosphotyrosine may be due to steric hindrance by bulky amino acid sidechains that obstruct access to the active site. The polypeptide is Dual specificity phosphatase 28 (Dusp28) (Mus musculus (Mouse)).